The sequence spans 293 residues: Pyridoxal 5'-phosphate synthase subunit PdxS (293 aa).

Asp25 is a D-ribose 5-phosphate binding site. The active-site Schiff-base intermediate with D-ribose 5-phosphate is Lys82. Asp103 contacts D-ribulose 5-phosphate. Gly154 is a binding site for D-ribose 5-phosphate. Position 166 (Arg166) interacts with D-glyceraldehyde 3-phosphate. Residues Gly215 and 236–237 (GS) contribute to the D-ribose 5-phosphate site.

The protein belongs to the PdxS/SNZ family. As to quaternary structure, homohexamer and homododecamer. In the presence of PdxT, forms a dodecamer of heterodimers.

It catalyses the reaction aldehydo-D-ribose 5-phosphate + D-glyceraldehyde 3-phosphate + L-glutamine = pyridoxal 5'-phosphate + L-glutamate + phosphate + 3 H2O + H(+). The protein operates within cofactor biosynthesis; pyridoxal 5'-phosphate biosynthesis. Its function is as follows. Catalyzes the formation of pyridoxal 5'-phosphate from ribose 5-phosphate (RBP), glyceraldehyde 3-phosphate (G3P) and ammonia. The ammonia is provided by the PdxT subunit. Can also use ribulose 5-phosphate and dihydroxyacetone phosphate as substrates, resulting from enzyme-catalyzed isomerization of RBP and G3P, respectively. The polypeptide is Pyridoxal 5'-phosphate synthase subunit PdxS (Thermotoga maritima (strain ATCC 43589 / DSM 3109 / JCM 10099 / NBRC 100826 / MSB8)).